Consider the following 67-residue polypeptide: Large ribosomal subunit protein bL35 (67 aa).

The segment covering 1–16 (MPKMKTKSSAKKRFRV) has biased composition (basic residues). Positions 1–24 (MPKMKTKSSAKKRFRVRPGGTVKR) are disordered.

The protein belongs to the bacterial ribosomal protein bL35 family.

The protein is Large ribosomal subunit protein bL35 of Paracidovorax citrulli (strain AAC00-1) (Acidovorax citrulli).